Consider the following 410-residue polypeptide: Inositol hexakisphosphate kinase 3 (410 aa).

Pro211–Gly219 provides a ligand contact to substrate. The tract at residues Gln333–Gly358 is disordered.

Belongs to the inositol phosphokinase (IPK) family. As to expression, detected in brain.

The protein resides in the cytoplasm. The enzyme catalyses 1D-myo-inositol hexakisphosphate + ATP = 5-diphospho-1D-myo-inositol 1,2,3,4,6-pentakisphosphate + ADP. It carries out the reaction 1-diphospho-1D-myo-inositol 2,3,4,5,6-pentakisphosphate + ATP + H(+) = 1,5-bis(diphospho)-1D-myo-inositol 2,3,4,6-tetrakisphosphate + ADP. Converts inositol hexakisphosphate (InsP6) to diphosphoinositol pentakisphosphate (InsP7/PP-InsP5). Converts 1,3,4,5,6-pentakisphosphate (InsP5) to PP-InsP4. In Homo sapiens (Human), this protein is Inositol hexakisphosphate kinase 3 (IP6K3).